Reading from the N-terminus, the 471-residue chain is Glutamate--tRNA ligase (471 aa).

The 'HIGH' region signature appears at 9–19; that stretch reads PSPTGYLHVGG. Positions 98, 100, 125, and 127 each coordinate Zn(2+). The 'KMSKS' region signature appears at 237-241; it reads KLSKR. Lys240 contributes to the ATP binding site.

It belongs to the class-I aminoacyl-tRNA synthetase family. Glutamate--tRNA ligase type 1 subfamily. In terms of assembly, monomer. Zn(2+) is required as a cofactor.

The protein resides in the cytoplasm. It carries out the reaction tRNA(Glu) + L-glutamate + ATP = L-glutamyl-tRNA(Glu) + AMP + diphosphate. Catalyzes the attachment of glutamate to tRNA(Glu) in a two-step reaction: glutamate is first activated by ATP to form Glu-AMP and then transferred to the acceptor end of tRNA(Glu). The chain is Glutamate--tRNA ligase from Enterobacter sp. (strain 638).